Here is a 238-residue protein sequence, read N- to C-terminus: tRNA (guanine-N(1)-)-methyltransferase (238 aa).

S-adenosyl-L-methionine-binding positions include G108 and 127–132 (LGDFVL).

This sequence belongs to the RNA methyltransferase TrmD family. In terms of assembly, homodimer.

It localises to the cytoplasm. The enzyme catalyses guanosine(37) in tRNA + S-adenosyl-L-methionine = N(1)-methylguanosine(37) in tRNA + S-adenosyl-L-homocysteine + H(+). In terms of biological role, specifically methylates guanosine-37 in various tRNAs. The sequence is that of tRNA (guanine-N(1)-)-methyltransferase from Streptococcus uberis (strain ATCC BAA-854 / 0140J).